We begin with the raw amino-acid sequence, 20 residues long: Thylakoid lumenal 22 kDa protein (20 aa).

Its subcellular location is the plastid. It is found in the chloroplast thylakoid lumen. The protein is Thylakoid lumenal 22 kDa protein of Spinacia oleracea (Spinach).